The following is a 457-amino-acid chain: Bifunctional protein GlmU (457 aa).

The tract at residues Met1–Arg230 is pyrophosphorylase. UDP-N-acetyl-alpha-D-glucosamine-binding positions include Leu9–Gly12, Lys23, Gln73, and Gly78–Thr79. Residue Asp103 coordinates Mg(2+). The UDP-N-acetyl-alpha-D-glucosamine site is built by Gly140, Glu155, Asn170, and Asn228. A Mg(2+)-binding site is contributed by Asn228. The linker stretch occupies residues Ile231–Asn251. Residues Gly252–Lys457 are N-acetyltransferase. UDP-N-acetyl-alpha-D-glucosamine is bound by residues Arg333 and Lys351. The active-site Proton acceptor is His363. UDP-N-acetyl-alpha-D-glucosamine is bound by residues Tyr366 and Asn377. Acetyl-CoA-binding positions include Asn386–Tyr387, Ala423, and Arg440.

This sequence in the N-terminal section; belongs to the N-acetylglucosamine-1-phosphate uridyltransferase family. The protein in the C-terminal section; belongs to the transferase hexapeptide repeat family. As to quaternary structure, homotrimer. Mg(2+) is required as a cofactor.

It localises to the cytoplasm. The catalysed reaction is alpha-D-glucosamine 1-phosphate + acetyl-CoA = N-acetyl-alpha-D-glucosamine 1-phosphate + CoA + H(+). It carries out the reaction N-acetyl-alpha-D-glucosamine 1-phosphate + UTP + H(+) = UDP-N-acetyl-alpha-D-glucosamine + diphosphate. Its pathway is nucleotide-sugar biosynthesis; UDP-N-acetyl-alpha-D-glucosamine biosynthesis; N-acetyl-alpha-D-glucosamine 1-phosphate from alpha-D-glucosamine 6-phosphate (route II): step 2/2. It participates in nucleotide-sugar biosynthesis; UDP-N-acetyl-alpha-D-glucosamine biosynthesis; UDP-N-acetyl-alpha-D-glucosamine from N-acetyl-alpha-D-glucosamine 1-phosphate: step 1/1. It functions in the pathway bacterial outer membrane biogenesis; LPS lipid A biosynthesis. In terms of biological role, catalyzes the last two sequential reactions in the de novo biosynthetic pathway for UDP-N-acetylglucosamine (UDP-GlcNAc). The C-terminal domain catalyzes the transfer of acetyl group from acetyl coenzyme A to glucosamine-1-phosphate (GlcN-1-P) to produce N-acetylglucosamine-1-phosphate (GlcNAc-1-P), which is converted into UDP-GlcNAc by the transfer of uridine 5-monophosphate (from uridine 5-triphosphate), a reaction catalyzed by the N-terminal domain. In Listeria monocytogenes serotype 4a (strain HCC23), this protein is Bifunctional protein GlmU.